The sequence spans 1057 residues: Probable E3 ubiquitin-protein ligase HERC4 (1057 aa).

7 RCC1 repeats span residues 1–51 (MLCW…FVLD), 52–101 (DGTV…ALND), 102–154 (KGQV…ALSK), 156–207 (SEVF…VLTL), 208–259 (SGAI…ALTK), 261–311 (GGVF…AFVP), and 313–366 (SGRI…CVKR). The HECT domain maps to 730–1057 (KNIDYKKPLK…IDHNEGFSLI (328 aa)). Cysteine 1025 functions as the Glycyl thioester intermediate in the catalytic mechanism.

It is found in the cytoplasm. The protein localises to the cytosol. The catalysed reaction is S-ubiquitinyl-[E2 ubiquitin-conjugating enzyme]-L-cysteine + [acceptor protein]-L-lysine = [E2 ubiquitin-conjugating enzyme]-L-cysteine + N(6)-ubiquitinyl-[acceptor protein]-L-lysine.. It functions in the pathway protein modification; protein ubiquitination. Functionally, probable E3 ubiquitin-protein ligase involved in either protein trafficking or in the distribution of cellular structures. Required for spermatozoon maturation and fertility, and for the removal of the cytoplasmic droplet of the spermatozoon. E3 ubiquitin-protein ligases accept ubiquitin from an E2 ubiquitin-conjugating enzyme in the form of a thioester and then directly transfer it to targeted substrates. In Rattus norvegicus (Rat), this protein is Probable E3 ubiquitin-protein ligase HERC4 (Herc4).